The following is a 631-amino-acid chain: MPSQEENELYMVKEAQRLRKSDPCAAMAWIITAKTLYPNAFNLQYEAYLLERDAQNYEEAAKCFSAIATNFQNQHTELWQEINSLTNALRNENETTPEHEFYVKMYKHLTPEVQHNIFMHTINHSADNLERIYIYILMFNKFPKSAITQAPRLLEMLAEGMKTEPDLYQRILVEEVLPMIQNKPPELSPNLACRLYTSSLEFYLRQIMDESDTADAWKNIFKVLMICGQMMGWEPFLPFSKHVNQNVYWEKLVDILSGSPAGSSQVLFYATTLFIYSLHGYIRNCKLRIEDADVTHVLVEGFMEWSPEGDGSEVPSMEPPKFSLTTAISPELSKAFLHAAQCWQLLNTDQFQRDFSQLMLALPLAPWISRFLFDLAIYFGHRDEANKLMADMTTQSSLVQSLQILSLNLMQGSMTLQGFQCILKILSELPTTQGQLLENMSLKGHRHMVFLPLTRSALVQYCVGAIISRLSRKVFEPNVPDRLLGDILVLQQLNLLNDVLLTQQIFNLIKQRKSFNLRTLSTYIINIDLLEELSHIWNSQQEDNFELTSSPNSSGTPTATTVAGGSQSRRIGTRGADKGARDEFRAITRQQIARCNENVITLLANFINQEHLMLAQHIFGISQPVETIVIK.

The segment covering 545-570 has biased composition (polar residues); sequence FELTSSPNSSGTPTATTVAGGSQSRR. The disordered stretch occupies residues 545 to 577; it reads FELTSSPNSSGTPTATTVAGGSQSRRIGTRGAD.

This sequence belongs to the Integrator subunit 10 family. Belongs to the multiprotein complex Integrator, at least composed of IntS1, IntS2, IntS3, IntS4, omd/IntS5, IntS6, defl/IntS7, IntS8, IntS9, IntS10, IntS11, IntS12, asun/IntS13, IntS14 and IntS15. The core complex associates with protein phosphatase 2A subunits mts/PP2A and Pp2A-29B, to form the Integrator-PP2A (INTAC) complex.

The protein resides in the nucleus. Component of the integrator complex, a multiprotein complex that terminates RNA polymerase II (Pol II) transcription in the promoter-proximal region of genes. The integrator complex provides a quality checkpoint during transcription elongation by driving premature transcription termination of transcripts that are unfavorably configured for transcriptional elongation: the complex terminates transcription by (1) catalyzing dephosphorylation of the C-terminal domain (CTD) of Pol II subunit Polr2A/Rbp1 and Spt5, and (2) degrading the exiting nascent RNA transcript via endonuclease activity. The integrator complex is also involved in the 3'-end processing of the U7 snRNA, and also the spliceosomal snRNAs U1, U2, U4 and U5. The protein is Integrator complex subunit 10 of Drosophila melanogaster (Fruit fly).